The following is a 465-amino-acid chain: Argininosuccinate lyase (465 aa).

This sequence belongs to the lyase 1 family. Argininosuccinate lyase subfamily.

It localises to the cytoplasm. It catalyses the reaction 2-(N(omega)-L-arginino)succinate = fumarate + L-arginine. The protein operates within amino-acid biosynthesis; L-arginine biosynthesis; L-arginine from L-ornithine and carbamoyl phosphate: step 3/3. The chain is Argininosuccinate lyase from Rhodopseudomonas palustris (strain BisB5).